The sequence spans 147 residues: Spermidine export protein MdtJ (147 aa).

4 consecutive transmembrane segments (helical) span residues 1 to 21 (MIYW…TLSM), 31 to 51 (TGHI…SLAV), 54 to 74 (VALG…ITIF), and 81 to 101 (ETLS…ILLV). The disordered stretch occupies residues 105–147 (TRKPKQPNCHRGNRPPSVQELKTQTTGHHKGVAVESGEHHAAA).

It belongs to the drug/metabolite transporter (DMT) superfamily. Small multidrug resistance (SMR) (TC 2.A.7.1) family. MdtJ subfamily. As to quaternary structure, forms a complex with MdtI.

It is found in the cell inner membrane. Catalyzes the excretion of spermidine. In Yersinia pestis bv. Antiqua (strain Antiqua), this protein is Spermidine export protein MdtJ.